Reading from the N-terminus, the 1432-residue chain is Gag-Pol polyprotein (1432 aa).

CCHC-type zinc fingers lie at residues 368 to 385 (QRCY…DCKN) and 386 to 403 (QKCF…NCKS). Positions 452–525 (VRALIDTGAD…TPVNLLGRSV (74 aa)) constitute a Peptidase A2 domain. Aspartate 457 (for protease activity; shared with dimeric partner) is an active-site residue. Positions 579–766 (DGKISRTPWD…EQVQWLGYEL (188 aa)) constitute a Reverse transcriptase domain. Mg(2+) contacts are provided by aspartate 645, aspartate 720, and aspartate 721. Positions 815–843 (KGKTDLKDKIKLTEEAIQCLETVNKRLKD) form a coiled coil. The RNase H type-1 domain maps to 959 to 1079 (IERYPTYYTD…VDQEVQKALQ (121 aa)). Mg(2+) contacts are provided by aspartate 968, glutamate 999, aspartate 1019, and aspartate 1071. The segment at 1157–1198 (EAIPQAIEEHEKWHTTAEILAREFQLPRRVAREIVHRCQACK) adopts an Integrase-type zinc-finger fold. Zn(2+) is bound by residues histidine 1166, histidine 1170, cysteine 1194, and cysteine 1197. An Integrase catalytic domain is found at 1206 to 1358 (RGTNPRERFL…TPYEIYLESE (153 aa)). The Mg(2+) site is built by aspartate 1219 and aspartate 1271. Positions 1376 to 1422 (KWAYVRDKRKVWKGPYKVLWDGEGAAVVEENAMPTLYPHRHMRFIPP) form a DNA-binding region, integrase-type.

Post-translationally, specific enzymatic cleavages by the viral protease yield mature proteins. The protease is released by autocatalytic cleavage. The polyprotein is cleaved during and after budding, this process is termed maturation.

The protein localises to the virion. The catalysed reaction is DNA(n) + a 2'-deoxyribonucleoside 5'-triphosphate = DNA(n+1) + diphosphate. The enzyme catalyses Endohydrolysis of RNA in RNA/DNA hybrids. Three different cleavage modes: 1. sequence-specific internal cleavage of RNA. Human immunodeficiency virus type 1 and Moloney murine leukemia virus enzymes prefer to cleave the RNA strand one nucleotide away from the RNA-DNA junction. 2. RNA 5'-end directed cleavage 13-19 nucleotides from the RNA end. 3. DNA 3'-end directed cleavage 15-20 nucleotides away from the primer terminus.. It catalyses the reaction 3'-end directed exonucleolytic cleavage of viral RNA-DNA hybrid.. Matrix protein p16 forms the outer shell of the core of the virus, lining the inner surface of the viral membrane. In terms of biological role, capsid protein p26 forms the conical core of the virus that encapsulates the genomic RNA-nucleocapsid complex. Functionally, the aspartyl protease mediates proteolytic cleavages of Gag and Gag-Pol polyproteins during or shortly after the release of the virion from the plasma membrane. Cleavages take place as an ordered, step-wise cascade to yield mature proteins. This process is called maturation. Displays maximal activity during the budding process just prior to particle release from the cell. Its function is as follows. Reverse transcriptase/ribonuclease H (RT) is a multifunctional enzyme that converts the viral RNA genome into dsDNA in the cytoplasm, shortly after virus entry into the cell. This enzyme displays a DNA polymerase activity that can copy either DNA or RNA templates, and a ribonuclease H (RNase H) activity that cleaves the RNA strand of RNA-DNA heteroduplexes in a partially processive 3' to 5' endonucleasic mode. Conversion of viral genomic RNA into dsDNA requires many steps. A tRNA binds to the primer-binding site (PBS) situated at the 5'-end of the viral RNA. RT uses the 3' end of the tRNA primer to perform a short round of RNA-dependent minus-strand DNA synthesis. The reading proceeds through the U5 region and ends after the repeated (R) region which is present at both ends of viral RNA. The portion of the RNA-DNA heteroduplex is digested by the RNase H, resulting in a ssDNA product attached to the tRNA primer. This ssDNA/tRNA hybridizes with the identical R region situated at the 3' end of viral RNA. This template exchange, known as minus-strand DNA strong stop transfer, can be either intra- or intermolecular. RT uses the 3' end of this newly synthesized short ssDNA to perform the RNA-dependent minus-strand DNA synthesis of the whole template. RNase H digests the RNA template except for a polypurine tract (PPT) situated at the 5'-end of the genome. It is not clear if both polymerase and RNase H activities are simultaneous. RNase H probably can proceed both in a polymerase-dependent (RNA cut into small fragments by the same RT performing DNA synthesis) and a polymerase-independent mode (cleavage of remaining RNA fragments by free RTs). Secondly, RT performs DNA-directed plus-strand DNA synthesis using the PPT that has not been removed by RNase H as primer. PPT and tRNA primers are then removed by RNase H. The 3' and 5' ssDNA PBS regions hybridize to form a circular dsDNA intermediate. Strand displacement synthesis by RT to the PBS and PPT ends produces a blunt ended, linear dsDNA copy of the viral genome that includes long terminal repeats (LTRs) at both ends. Integrase catalyzes viral DNA integration into the host chromosome, by performing a series of DNA cutting and joining reactions. This enzyme activity takes place after virion entry into a cell and reverse transcription of the RNA genome in dsDNA. The polypeptide is Gag-Pol polyprotein (gag-pol) (Jembrana disease virus (JDV)).